Consider the following 821-residue polypeptide: Probable phosphoenolpyruvate synthase (821 aa).

H444 acts as the Tele-phosphohistidine intermediate in catalysis. Positions 543, 590, 687, 709, 710, 711, and 712 each coordinate substrate. E687 contacts Mg(2+). Residue D712 participates in Mg(2+) binding. The Proton donor role is filled by C759.

Belongs to the PEP-utilizing enzyme family. The cofactor is Mg(2+).

The catalysed reaction is pyruvate + ATP + H2O = phosphoenolpyruvate + AMP + phosphate + 2 H(+). The protein operates within carbohydrate biosynthesis; gluconeogenesis. Functionally, catalyzes the phosphorylation of pyruvate to phosphoenolpyruvate. The sequence is that of Probable phosphoenolpyruvate synthase (ppsA) from Pyrococcus horikoshii (strain ATCC 700860 / DSM 12428 / JCM 9974 / NBRC 100139 / OT-3).